The sequence spans 122 residues: Holo-[acyl-carrier-protein] synthase (122 aa).

Mg(2+) is bound by residues Asp5 and Glu54.

The protein belongs to the P-Pant transferase superfamily. AcpS family. Requires Mg(2+) as cofactor.

It localises to the cytoplasm. It carries out the reaction apo-[ACP] + CoA = holo-[ACP] + adenosine 3',5'-bisphosphate + H(+). In terms of biological role, transfers the 4'-phosphopantetheine moiety from coenzyme A to a Ser of acyl-carrier-protein. In Aquifex aeolicus (strain VF5), this protein is Holo-[acyl-carrier-protein] synthase.